The primary structure comprises 62 residues: Translational regulator CsrA (62 aa).

It belongs to the CsrA/RsmA family. As to quaternary structure, homodimer; the beta-strands of each monomer intercalate to form a hydrophobic core, while the alpha-helices form wings that extend away from the core.

The protein resides in the cytoplasm. In terms of biological role, a key translational regulator that binds mRNA to regulate translation initiation and/or mRNA stability. Mediates global changes in gene expression, shifting from rapid growth to stress survival by linking envelope stress, the stringent response and the catabolite repression systems. Usually binds in the 5'-UTR; binding at or near the Shine-Dalgarno sequence prevents ribosome-binding, repressing translation, binding elsewhere in the 5'-UTR can activate translation and/or stabilize the mRNA. Its function is antagonized by small RNA(s). This Pasteurella multocida (strain Pm70) protein is Translational regulator CsrA.